Reading from the N-terminus, the 23-residue chain is Paralytic peptide 1 (23 aa).

The cysteines at positions 7 and 19 are disulfide-linked.

It belongs to the GBP/PSP1/paralytic peptide family. As to expression, hemolymph.

Functionally, causes rapid, rigid paralysis when injected into Lepidopteran larvae. The physiological role may be to reduce hemolymph loss following injury and promote wound healing. This Heliothis virescens (Tobacco budworm moth) protein is Paralytic peptide 1.